The chain runs to 143 residues: Midkine (143 aa).

An N-terminal signal peptide occupies residues 1–20 (MQHRGFLLLTLLALLALTSA). Disulfide bonds link Cys-37–Cys-61, Cys-45–Cys-70, Cys-52–Cys-74, Cys-84–Cys-116, and Cys-94–Cys-126.

It belongs to the pleiotrophin family. As to quaternary structure, homodimer. Interacts with ALK. Interacts with LRP1; promotes neuronal survival. Interacts with LRP2. Interacts with NCAM1. Interacts (via C-terminal) with PTPRZ1 (via chondroitin sulfate chains); this interaction is inhibited by PTN; this interaction promotes neuronal migration. Interacts with NCL; this interaction promotes NCL clustering and lateral movements of this complex into lipid rafts leading to MDK internalization. Interacts with LRP6 and LRP8: this interaction is calcium dependent. Interacts with ITGA4. Interacts with ITGA6. Interacts with ITGB1. Interacts with ITGA4:ITGB1 complex; this interaction mediates MDK-induced osteoblast cells migration through PXN phosphorylation. Interacts with ITGA6:ITGB1 complex; this interaction mediates MDK-induced neurite outgrowth. Interacts with NOTCH2; this interaction mediates a nuclear accumulation of NOTCH2 and therefore activation of NOTCH2 signaling leading to interaction between HES1 and STAT3. Interacts with GPC2 (via heparan sulfate chain); this interaction is inhibited by heparin followed by chondroitin sulfate E; this interaction induces GPC2 clustering through heparan sulfate chain; this interaction induces neuronal cell adhesion and neurite outgrowth. Interacts with SDC3; this interaction induces SDC3 clustering; this interaction induces neuronal cell adhesion and neurite outgrowth. Interacts with SDC1. Interacts with CSPG5; this interaction promotes elongation of oligodendroglial precursor-like cells. As to expression, expressed in various tumor cell lines. In insulinoma tissue predominantly expressed in precancerous lesions.

The protein resides in the secreted. Secreted protein that functions as a cytokine and growth factor and mediates its signal through cell-surface proteoglycan and non-proteoglycan receptors. Binds cell-surface proteoglycan receptors via their chondroitin sulfate (CS) groups. Thereby regulates many processes like inflammatory response, cell proliferation, cell adhesion, cell growth, cell survival, tissue regeneration, cell differentiation and cell migration. Participates in inflammatory processes by exerting two different activities. Firstly, mediates neutrophils and macrophages recruitment to the sites of inflammation both by direct action by cooperating namely with ITGB2 via LRP1 and by inducing chemokine expression. This inflammation can be accompanied by epithelial cell survival and smooth muscle cell migration after renal and vessel damage, respectively. Secondly, suppresses the development of tolerogenic dendric cells thereby inhibiting the differentiation of regulatory T cells and also promote T cell expansion through NFAT signaling and Th1 cell differentiation. Promotes tissue regeneration after injury or trauma. After heart damage negatively regulates the recruitment of inflammatory cells and mediates cell survival through activation of anti-apoptotic signaling pathways via MAPKs and AKT pathways through the activation of angiogenesis. Also facilitates liver regeneration as well as bone repair by recruiting macrophage at trauma site and by promoting cartilage development by facilitating chondrocyte differentiation. Plays a role in brain by promoting neural precursor cells survival and growth through interaction with heparan sulfate proteoglycans. Binds PTPRZ1 and promotes neuronal migration and embryonic neurons survival. Binds SDC3 or GPC2 and mediates neurite outgrowth and cell adhesion. Binds chondroitin sulfate E and heparin leading to inhibition of neuronal cell adhesion induced by binding with GPC2. Binds CSPG5 and promotes elongation of oligodendroglial precursor-like cells. Also binds ITGA6:ITGB1 complex; this interaction mediates MDK-induced neurite outgrowth. Binds LRP1; promotes neuronal survival. Binds ITGA4:ITGB1 complex; this interaction mediates MDK-induced osteoblast cells migration through PXN phosphorylation. Binds anaplastic lymphoma kinase (ALK) which induces ALK activation and subsequent phosphorylation of the insulin receptor substrate (IRS1), followed by the activation of mitogen-activated protein kinase (MAPK) and PI3-kinase, and the induction of cell proliferation. Promotes epithelial to mesenchymal transition through interaction with NOTCH2. During arteriogenesis, plays a role in vascular endothelial cell proliferation by inducing VEGFA expression and release which in turn induces nitric oxide synthase expression. Moreover activates vasodilation through nitric oxide synthase activation. Negatively regulates bone formation in response to mechanical load by inhibiting Wnt/beta-catenin signaling in osteoblasts. In addition plays a role in hippocampal development, working memory, auditory response, early fetal adrenal gland development and the female reproductive system. The sequence is that of Midkine from Homo sapiens (Human).